The following is a 424-amino-acid chain: UDP-N-acetylglucosamine 1-carboxyvinyltransferase (424 aa).

A phosphoenolpyruvate-binding site is contributed by 22–23 (KN). Residue Arg93 coordinates UDP-N-acetyl-alpha-D-glucosamine. Residue Cys117 is the Proton donor of the active site. A 2-(S-cysteinyl)pyruvic acid O-phosphothioketal modification is found at Cys117. Residues 162 to 165 (KVSV), Asp307, and Ile329 contribute to the UDP-N-acetyl-alpha-D-glucosamine site.

It belongs to the EPSP synthase family. MurA subfamily.

It localises to the cytoplasm. The enzyme catalyses phosphoenolpyruvate + UDP-N-acetyl-alpha-D-glucosamine = UDP-N-acetyl-3-O-(1-carboxyvinyl)-alpha-D-glucosamine + phosphate. It participates in cell wall biogenesis; peptidoglycan biosynthesis. Functionally, cell wall formation. Adds enolpyruvyl to UDP-N-acetylglucosamine. The sequence is that of UDP-N-acetylglucosamine 1-carboxyvinyltransferase from Actinobacillus pleuropneumoniae serotype 3 (strain JL03).